Reading from the N-terminus, the 404-residue chain is Acetate kinase (404 aa).

N7 lines the Mg(2+) pocket. ATP is bound at residue K14. R98 contacts substrate. D155 serves as the catalytic Proton donor/acceptor. ATP-binding positions include H214–G218, D289–R291, and G337–N341. E390 serves as a coordination point for Mg(2+).

The protein belongs to the acetokinase family. As to quaternary structure, homodimer. Mg(2+) serves as cofactor. Mn(2+) is required as a cofactor.

The protein resides in the cytoplasm. It carries out the reaction acetate + ATP = acetyl phosphate + ADP. Its pathway is metabolic intermediate biosynthesis; acetyl-CoA biosynthesis; acetyl-CoA from acetate: step 1/2. In terms of biological role, catalyzes the formation of acetyl phosphate from acetate and ATP. Can also catalyze the reverse reaction. The polypeptide is Acetate kinase (Rippkaea orientalis (strain PCC 8801 / RF-1) (Cyanothece sp. (strain PCC 8801))).